The chain runs to 232 residues: Leucyl/phenylalanyl-tRNA--protein transferase (232 aa).

The protein belongs to the L/F-transferase family.

The protein resides in the cytoplasm. It catalyses the reaction N-terminal L-lysyl-[protein] + L-leucyl-tRNA(Leu) = N-terminal L-leucyl-L-lysyl-[protein] + tRNA(Leu) + H(+). It carries out the reaction N-terminal L-arginyl-[protein] + L-leucyl-tRNA(Leu) = N-terminal L-leucyl-L-arginyl-[protein] + tRNA(Leu) + H(+). The enzyme catalyses L-phenylalanyl-tRNA(Phe) + an N-terminal L-alpha-aminoacyl-[protein] = an N-terminal L-phenylalanyl-L-alpha-aminoacyl-[protein] + tRNA(Phe). Functionally, functions in the N-end rule pathway of protein degradation where it conjugates Leu, Phe and, less efficiently, Met from aminoacyl-tRNAs to the N-termini of proteins containing an N-terminal arginine or lysine. This chain is Leucyl/phenylalanyl-tRNA--protein transferase, found in Nitrosospira multiformis (strain ATCC 25196 / NCIMB 11849 / C 71).